Consider the following 571-residue polypeptide: Septation ring formation regulator EzrA (571 aa).

Over Met-1 to Tyr-3 the chain is Extracellular. Residues Met-4–Leu-22 traverse the membrane as a helical segment. The Cytoplasmic portion of the chain corresponds to Lys-23 to Glu-571. Coiled-coil stretches lie at residues Leu-248–Glu-298, Asp-326–Glu-374, Lys-400–Arg-437, and Arg-478–Phe-529.

The protein belongs to the EzrA family.

The protein localises to the cell membrane. In terms of biological role, negative regulator of FtsZ ring formation; modulates the frequency and position of FtsZ ring formation. Inhibits FtsZ ring formation at polar sites. Interacts either with FtsZ or with one of its binding partners to promote depolymerization. In Listeria monocytogenes serovar 1/2a (strain ATCC BAA-679 / EGD-e), this protein is Septation ring formation regulator EzrA.